The primary structure comprises 129 residues: Small ribosomal subunit protein uS11 (129 aa).

It belongs to the universal ribosomal protein uS11 family. In terms of assembly, part of the 30S ribosomal subunit. Interacts with proteins S7 and S18. Binds to IF-3.

Functionally, located on the platform of the 30S subunit, it bridges several disparate RNA helices of the 16S rRNA. Forms part of the Shine-Dalgarno cleft in the 70S ribosome. The polypeptide is Small ribosomal subunit protein uS11 (Nitrosospira multiformis (strain ATCC 25196 / NCIMB 11849 / C 71)).